The sequence spans 75 residues: Protein P8 (75 aa).

The tract at residues 19-47 is disordered; it reads PMGGMPSIASSSSAETGQQTQSGNFTGGG. Residues 26 to 39 are compositionally biased toward polar residues; the sequence is IASSSSAETGQQTQ. Residues 55 to 72 form a helical membrane-spanning segment; that stretch reads NNQLLIVGAVVIGLFLVI.

Its subcellular location is the virion membrane. The protein is Protein P8 (VIII) of Pseudoalteromonas phage PM2 (Bacteriophage PM2).